The following is a 605-amino-acid chain: Heparan-sulfate 6-O-sulfotransferase 2 (605 aa).

Over 1 to 4 the chain is Cytoplasmic; it reads MALP. The disordered stretch occupies residues 1-66; the sequence is MALPACAVRE…GVSHGFHTRP (66 aa). A helical; Signal-anchor for type II membrane protein membrane pass occupies residues 5–27; sequence ACAVREFEPPRQPERGAPVRTTC. Over residues 9–18 the composition is skewed to basic and acidic residues; sequence REFEPPRQPE. The Lumenal segment spans residues 28-605; that stretch reads PRRHSRVEAE…DYIGSVEKWR (578 aa). N-linked (GlcNAc...) asparagine glycosylation occurs at Asn209. Residue 233–241 participates in 3'-phosphoadenylyl sulfate binding; sequence HIQKTGGTT. Substrate is bound by residues 263-264, Arg280, Trp285, and His290; that span reads KK. Residue His290 is the Proton acceptor of the active site. Positions 325 and 333 each coordinate 3'-phosphoadenylyl sulfate. Substrate-binding residues include His337 and Trp344. Asn404 is a glycosylation site (N-linked (GlcNAc...) asparagine). Position 457–459 (457–459) interacts with 3'-phosphoadenylyl sulfate; it reads TQY. Asn460 carries an N-linked (GlcNAc...) asparagine glycan. A 3'-phosphoadenylyl sulfate-binding site is contributed by 463–464; the sequence is RA. Residues 530–605 form a disordered region; sequence FQSQGQGQSQ…DYIGSVEKWR (76 aa). Over residues 531–571 the composition is skewed to low complexity; that stretch reads QSQGQGQSQNPNQNQSQNPNPNANQNLTQNLMQNLTQSLSQ. N-linked (GlcNAc...) asparagine glycosylation is found at Asn544, Asn556, Asn564, Asn589, and Asn592. Positions 579–597 are enriched in polar residues; sequence KQNSGKEQNDNTSNGTNDY.

The protein belongs to the sulfotransferase 6 family.

It is found in the membrane. It carries out the reaction alpha-D-glucosaminyl-[heparan sulfate](n) + 3'-phosphoadenylyl sulfate = 6-sulfo-alpha-D-glucosaminyl-[heparan sulfate](n) + adenosine 3',5'-bisphosphate + H(+). In terms of biological role, 6-O-sulfation enzyme which catalyzes the transfer of sulfate from 3'-phosphoadenosine 5'-phosphosulfate (PAPS) to position 6 of the N-sulfoglucosamine residue (GlcNS) of heparan sulfate. This chain is Heparan-sulfate 6-O-sulfotransferase 2, found in Homo sapiens (Human).